A 3462-amino-acid polypeptide reads, in one-letter code: Extracellular matrix-binding protein EbhA (3462 aa).

Residues Met1–Asn19 show a composition bias toward polar residues. The interval Met1–Val21 is disordered. FIVAR domains are found at residues Ala24–Ala82, Ala150–Ala208, Ala276–Ala334, Ala402–Ala460, Ala528–Ala586, Ala654–Ala712, Ala780–Ala838, Ala906–Ala964, Ala1032–Glu1093, Ala1158–Ala1216, Ala1284–Ala1342, Ala1410–Ala1467, Leu1535–Ala1593, Ala1661–Leu1719, Ala1787–Leu1845, Ala1913–Val1971, Ser2039–Ala2093, Ala2161–Leu2220, and Ala2415–Ala2471. A helical membrane pass occupies residues Val3267 to Ala3289. Residues Arg3365–Lys3462 form a disordered region. 2 stretches are compositionally biased toward basic and acidic residues: residues Thr3380–His3390 and Gln3429–Ser3439. Over residues Thr3444–Lys3462 the composition is skewed to basic residues.

It localises to the cell membrane. The protein is Extracellular matrix-binding protein EbhA (ebhA) of Staphylococcus aureus (strain Newman).